The chain runs to 378 residues: O-methyltransferase gsfD (378 aa).

S-adenosyl-L-methionine is bound by residues 219 to 220, Asp244, 266 to 267, and Arg282; these read GG and DM. Catalysis depends on His286, which acts as the Proton acceptor.

This sequence belongs to the class I-like SAM-binding methyltransferase superfamily. Cation-independent O-methyltransferase family.

The enzyme catalyses desmethyl-dehydrogriseofulvin + S-adenosyl-L-methionine = dehydrogriseofulvin + S-adenosyl-L-homocysteine + H(+). Its pathway is secondary metabolite biosynthesis; terpenoid biosynthesis. Functionally, O-methyltransferase; part of the gene cluster that mediates the biosynthesis of griseofulvin, an important antifungal drug that has been in use for a long time for treating dermatophyte infections. The first step of the pathway is the formation of the heptaketide backbone by gsfA which is initiated by priming with acetyl-CoA, followed by sequential condensations of 6 malonyl-CoA units. The resulting benzophenone can undergo a spontaneous dehydration to form norlichexanthone. However, the true precursor for the griseofulvin biosynthesis is not norlichexanthone, but the heptaketide benzophenone that is O-methylated at 3-OH by gsfB to produce griseophenone D which is further methylated at 9-OH by gsfC to yield griseophenone C. Griseophenone C is then substrate of halogenase gsfI which is responsible for the regio-specific chlorination at the C13 position to form griseophenone B. The cytochrome P450 gsfF catalyzes the coupling of orcinol and phloroglucinol rings in griseophenone B to form desmethyl-dehydrogriseofulvin A which is further methylated at 5-OH by gsfD to yield dehydrogriseofulvin. Finally, gsfE performs stereospecific reduction of enone 18 of dehydrogriseofulvin to afford the final product griseofulvin. The sequence is that of O-methyltransferase gsfD from Penicillium aethiopicum.